The following is a 226-amino-acid chain: Deoxyribose-phosphate aldolase (226 aa).

Catalysis depends on aspartate 93, which acts as the Proton donor/acceptor. Lysine 159 functions as the Schiff-base intermediate with acetaldehyde in the catalytic mechanism. Lysine 189 acts as the Proton donor/acceptor in catalysis.

Belongs to the DeoC/FbaB aldolase family. DeoC type 1 subfamily.

The protein resides in the cytoplasm. The enzyme catalyses 2-deoxy-D-ribose 5-phosphate = D-glyceraldehyde 3-phosphate + acetaldehyde. It functions in the pathway carbohydrate degradation; 2-deoxy-D-ribose 1-phosphate degradation; D-glyceraldehyde 3-phosphate and acetaldehyde from 2-deoxy-alpha-D-ribose 1-phosphate: step 2/2. Its function is as follows. Catalyzes a reversible aldol reaction between acetaldehyde and D-glyceraldehyde 3-phosphate to generate 2-deoxy-D-ribose 5-phosphate. In Mycobacterium marinum (strain ATCC BAA-535 / M), this protein is Deoxyribose-phosphate aldolase.